Here is a 288-residue protein sequence, read N- to C-terminus: Coiled-coil domain-containing protein 190 (288 aa).

Residues 16-69 (LERKSARQAEARLSLRLQRLEIICLYHVKSLAREQRQLQKELQRLQQDIIKKRF) are a coiled coil. The segment at 141–235 (GERTSCFKEG…SSVDYAGSFK (95 aa)) is disordered. Residues 177-188 (HDQELSTNKTED) show a composition bias toward basic and acidic residues. A compositionally biased stretch (polar residues) spans 203 to 213 (ANETRSENASQ).

The polypeptide is Coiled-coil domain-containing protein 190 (Ccdc190) (Mus musculus (Mouse)).